Reading from the N-terminus, the 323-residue chain is ATP synthase gamma chain (323 aa).

Belongs to the ATPase gamma chain family. As to quaternary structure, F-type ATPases have 2 components, CF(1) - the catalytic core - and CF(0) - the membrane proton channel. CF(1) has five subunits: alpha(3), beta(3), gamma(1), delta(1), epsilon(1). CF(0) has three main subunits: a, b and c.

The protein localises to the cell inner membrane. Produces ATP from ADP in the presence of a proton gradient across the membrane. The gamma chain is believed to be important in regulating ATPase activity and the flow of protons through the CF(0) complex. The polypeptide is ATP synthase gamma chain (Rickettsia africae (strain ESF-5)).